The chain runs to 172 residues: MDYFTLFGLPIRYDVDGGLLASRFQDLQRQFHPDRYATSPECERMLAVQLAATINNAYQALKHPLKRAEYMLSLHGFDVNNEQHTMRDTAFLMEQLELREELDTISQRSDADEVLTTFAERLQVMIGTRRSHMRHELDNETWTDAADTVRKLRFLDKLQQQVEELEEQLLDR.

In terms of domain architecture, J spans 2 to 74 (DYFTLFGLPI…LKRAEYMLSL (73 aa)).

It belongs to the HscB family. In terms of assembly, interacts with HscA and stimulates its ATPase activity. Interacts with IscU.

In terms of biological role, co-chaperone involved in the maturation of iron-sulfur cluster-containing proteins. Seems to help targeting proteins to be folded toward HscA. The polypeptide is Co-chaperone protein HscB (Pectobacterium atrosepticum (strain SCRI 1043 / ATCC BAA-672) (Erwinia carotovora subsp. atroseptica)).